A 166-amino-acid polypeptide reads, in one-letter code: Chemoreceptor glutamine deamidase CheD (166 aa).

The protein belongs to the CheD family. In terms of assembly, forms a complex with CheC.

The enzyme catalyses L-glutaminyl-[protein] + H2O = L-glutamyl-[protein] + NH4(+). Deamidates glutamine residues to glutamate on methyl-accepting chemotaxis receptors (MCPs). CheD-mediated MCP deamidation is required for productive communication of the conformational signals of the chemoreceptors to the CheA kinase. This Bacillus velezensis (strain DSM 23117 / BGSC 10A6 / LMG 26770 / FZB42) (Bacillus amyloliquefaciens subsp. plantarum) protein is Chemoreceptor glutamine deamidase CheD.